Reading from the N-terminus, the 158-residue chain is Putative pre-16S rRNA nuclease (158 aa).

It belongs to the YqgF nuclease family.

It is found in the cytoplasm. Its function is as follows. Could be a nuclease involved in processing of the 5'-end of pre-16S rRNA. The protein is Putative pre-16S rRNA nuclease of Hahella chejuensis (strain KCTC 2396).